A 474-amino-acid chain; its full sequence is PRAME family member 1 (474 aa).

The stretch at 97 to 124 (RWKLQVLDLRDVDENFWARWPGAWALSC) is one LRR 1; degenerate repeat. Residues 179–203 (HLCCSKLVNYLTPIKYLRKSLKIIY) form an LRR 2; degenerate repeat. The LRR 3; degenerate repeat unit spans residues 204 to 230 (LNSIQELEIRNMSWPRLIRKLRCYLKE). One copy of the LRR 4; degenerate repeat lies at 231-265 (MKNLRKLVFSRCHHYTSDNELEGRLVAKFSSVFLR). LRR repeat units lie at residues 266 to 291 (LEHL…IRCL), 292 to 323 (QNPL…GYLK), 324 to 342 (HLNL…PLGA), 348 to 375 (AASL…GLSR), and 376 to 400 (CSQL…LLRH).

Belongs to the PRAME family.

In Homo sapiens (Human), this protein is PRAME family member 1.